Reading from the N-terminus, the 377-residue chain is MSDSSHNLLYNKFELPESVKMSPVEGAVGGIDKVARFVADPLEKGMGHTLGSALRRALLIGLEAPAIVSFSMTGVLHEYMAVEGIIEDVTNIVLNLKGSLLKKYPLQDCEGGRCSQKLRATISIDASDLAAAGGQKEVTLGDLLQEGTFEAVNPEHVIFTVTRPMQLEVMLRVAFGRGYSPSERIVLEERGMNEIVLDAAFSPVVLVNYFVEDTRVGQDTDFDRLVLQVETDGRVAPKEAVAFATQILSKHFSVFEKMDEKRIVFEEAISVEKENKDDILHKLVLGINEIELSVRSTNCLSNANIETIGELVIMPEPRLLQFRNFGKKSLCEIKNKLKEMKLELGMDLSQFGVGLDNVKEKMKWYAEKIRSSKNTKG.

An alpha N-terminal domain (alpha-NTD) region spans residues 1 to 259 (MSDSSHNLLY…KHFSVFEKMD (259 aa)). The interval 276–377 (KDDILHKLVL…KIRSSKNTKG (102 aa)) is alpha C-terminal domain (alpha-CTD).

This sequence belongs to the RNA polymerase alpha chain family. In terms of assembly, homodimer. The RNAP catalytic core consists of 2 alpha, 1 beta, 1 beta' and 1 omega subunit. When a sigma factor is associated with the core the holoenzyme is formed, which can initiate transcription.

It catalyses the reaction RNA(n) + a ribonucleoside 5'-triphosphate = RNA(n+1) + diphosphate. In terms of biological role, DNA-dependent RNA polymerase catalyzes the transcription of DNA into RNA using the four ribonucleoside triphosphates as substrates. The sequence is that of DNA-directed RNA polymerase subunit alpha from Chlamydia trachomatis serovar D (strain ATCC VR-885 / DSM 19411 / UW-3/Cx).